Here is a 217-residue protein sequence, read N- to C-terminus: Uracil-DNA glycosylase (217 aa).

Asp-62 functions as the Proton acceptor in the catalytic mechanism.

Belongs to the uracil-DNA glycosylase (UDG) superfamily. UNG family.

The protein resides in the cytoplasm. It carries out the reaction Hydrolyzes single-stranded DNA or mismatched double-stranded DNA and polynucleotides, releasing free uracil.. In terms of biological role, excises uracil residues from the DNA which can arise as a result of misincorporation of dUMP residues by DNA polymerase or due to deamination of cytosine. The protein is Uracil-DNA glycosylase of Streptococcus sanguinis (strain SK36).